Here is a 279-residue protein sequence, read N- to C-terminus: Large ribosomal subunit protein uL2 (279 aa).

2 disordered regions span residues 34–55 (LAPL…RHKG) and 221–279 (RGMA…RKAK). Basic residues predominate over residues 40-55 (SGGRNRAGRITSRHKG). The segment covering 232-242 (MGGGEGRSKSG) has biased composition (gly residues). Basic residues predominate over residues 259–279 (LKTRNKKKASSKLIVRGRKAK).

Belongs to the universal ribosomal protein uL2 family. In terms of assembly, part of the 50S ribosomal subunit. Forms a bridge to the 30S subunit in the 70S ribosome.

Its function is as follows. One of the primary rRNA binding proteins. Required for association of the 30S and 50S subunits to form the 70S ribosome, for tRNA binding and peptide bond formation. It has been suggested to have peptidyltransferase activity; this is somewhat controversial. Makes several contacts with the 16S rRNA in the 70S ribosome. This Chlorobium phaeobacteroides (strain BS1) protein is Large ribosomal subunit protein uL2.